The sequence spans 210 residues: MAYSVKELFKTLQGEGAQAGRAAVFCRFAGCNLWTGRESDRAGAACTFCDTDFVGTDGQGGGKFADAAGLADAIAACWGEHPADRYVVFTGGEPLLQLDEALLQAVHAQGFTVAIETNGTLPPPPGIDWICVSPKGRAPVVVERGHELKLVFPQADARPEAFAHLAFEHFFLQPMDGPARAAHTTQAVQYCLDHPQWRLSLQTHKYIGIP.

Substrate-binding positions include 12–14 (LQG) and arginine 27. A Radical SAM core domain is found at 18–210 (QAGRAAVFCR…LQTHKYIGIP (193 aa)). The [4Fe-4S] cluster site is built by cysteine 31, cysteine 46, and cysteine 49. Residue threonine 51 participates in Mg(2+) binding. Residue threonine 90 participates in substrate binding. Residues glycine 92, 133-135 (SPK), and 173-176 (QPMD) each bind S-adenosyl-L-methionine. Proline 210 lines the substrate pocket.

Belongs to the radical SAM superfamily. 7-carboxy-7-deazaguanine synthase family. Homodimer. Requires [4Fe-4S] cluster as cofactor. S-adenosyl-L-methionine serves as cofactor. It depends on Mg(2+) as a cofactor.

It carries out the reaction 6-carboxy-5,6,7,8-tetrahydropterin + H(+) = 7-carboxy-7-deazaguanine + NH4(+). It participates in purine metabolism; 7-cyano-7-deazaguanine biosynthesis. In terms of biological role, catalyzes the complex heterocyclic radical-mediated conversion of 6-carboxy-5,6,7,8-tetrahydropterin (CPH4) to 7-carboxy-7-deazaguanine (CDG), a step common to the biosynthetic pathways of all 7-deazapurine-containing compounds. The chain is 7-carboxy-7-deazaguanine synthase from Bordetella pertussis (strain Tohama I / ATCC BAA-589 / NCTC 13251).